Here is a 411-residue protein sequence, read N- to C-terminus: Serine hydroxymethyltransferase (411 aa).

(6S)-5,6,7,8-tetrahydrofolate-binding positions include Leu119 and 123-125; that span reads GHL. Position 228 is an N6-(pyridoxal phosphate)lysine (Lys228). 351-353 is a (6S)-5,6,7,8-tetrahydrofolate binding site; it reads SPF.

The protein belongs to the SHMT family. In terms of assembly, homodimer. Pyridoxal 5'-phosphate serves as cofactor.

The protein localises to the cytoplasm. It carries out the reaction (6R)-5,10-methylene-5,6,7,8-tetrahydrofolate + glycine + H2O = (6S)-5,6,7,8-tetrahydrofolate + L-serine. It participates in one-carbon metabolism; tetrahydrofolate interconversion. Its pathway is amino-acid biosynthesis; glycine biosynthesis; glycine from L-serine: step 1/1. In terms of biological role, catalyzes the reversible interconversion of serine and glycine with tetrahydrofolate (THF) serving as the one-carbon carrier. This reaction serves as the major source of one-carbon groups required for the biosynthesis of purines, thymidylate, methionine, and other important biomolecules. Also exhibits THF-independent aldolase activity toward beta-hydroxyamino acids, producing glycine and aldehydes, via a retro-aldol mechanism. The sequence is that of Serine hydroxymethyltransferase from Clostridium novyi (strain NT).